The chain runs to 616 residues: Elongation factor 4 (616 aa).

The tr-type G domain maps to 14–195 (SRIRNFCIIA…EVIRQVPPPV (182 aa)). GTP-binding positions include 26–31 (DHGKST) and 142–145 (NKID).

It belongs to the TRAFAC class translation factor GTPase superfamily. Classic translation factor GTPase family. LepA subfamily.

The protein resides in the cell membrane. It catalyses the reaction GTP + H2O = GDP + phosphate + H(+). Required for accurate and efficient protein synthesis under certain stress conditions. May act as a fidelity factor of the translation reaction, by catalyzing a one-codon backward translocation of tRNAs on improperly translocated ribosomes. Back-translocation proceeds from a post-translocation (POST) complex to a pre-translocation (PRE) complex, thus giving elongation factor G a second chance to translocate the tRNAs correctly. Binds to ribosomes in a GTP-dependent manner. This chain is Elongation factor 4, found in Nocardia farcinica (strain IFM 10152).